The primary structure comprises 679 residues: FAST kinase domain-containing protein 2, mitochondrial (679 aa).

Residues serine 113 and serine 126 each carry the phosphoserine modification. The region spanning 607-664 (VAVLCVPKSAYCLNSNHLRGLMAMKIRHLNVMGFHVILIHNWELKKLKMEDAVTFVRK) is the RAP domain.

Belongs to the FAST kinase family. As to quaternary structure, monomer. Found in a complex with GRSF1, DDX28, DHX30 and FASTKD5. Associates with the 16S mitochondrial rRNA (16S mt-rRNA). Forms a regulatory protein-RNA complex, consisting of RCC1L, NGRN, RPUSD3, RPUSD4, TRUB2, FASTKD2 and 16S mt-rRNA.

It localises to the mitochondrion matrix. It is found in the mitochondrion nucleoid. In terms of biological role, plays an important role in assembly of the mitochondrial large ribosomal subunit. As a component of a functional protein-RNA module, consisting of RCC1L, NGRN, RPUSD3, RPUSD4, TRUB2, FASTKD2 and 16S mitochondrial ribosomal RNA (16S mt-rRNA), controls 16S mt-rRNA abundance and is required for intra-mitochondrial translation. May play a role in mitochondrial apoptosis. The sequence is that of FAST kinase domain-containing protein 2, mitochondrial (Fastkd2) from Rattus norvegicus (Rat).